The sequence spans 334 residues: Malate dehydrogenase, cytoplasmic (334 aa).

An NAD(+)-binding site is contributed by 11 to 17 (GAAGQIA). Residues arginine 92 and arginine 98 each coordinate substrate. NAD(+) contacts are provided by residues asparagine 105, glutamine 112, and 129–131 (VGN). The substrate site is built by asparagine 131 and arginine 162. Histidine 187 (proton acceptor) is an active-site residue.

It belongs to the LDH/MDH superfamily. MDH type 2 family. As to quaternary structure, homodimer.

The protein localises to the cytoplasm. The protein resides in the cytosol. It catalyses the reaction (S)-malate + NAD(+) = oxaloacetate + NADH + H(+). It carries out the reaction (S)-2-hydroxyglutarate + NAD(+) = 2-oxoglutarate + NADH + H(+). Catalyzes the reduction of aromatic alpha-keto acids in the presence of NADH. Plays essential roles in the malate-aspartate shuttle and the tricarboxylic acid cycle, important in mitochondrial NADH supply for oxidative phosphorylation. Catalyzes the reduction of 2-oxoglutarate to 2-hydroxyglutarate, leading to elevated reactive oxygen species (ROS). This Gallus gallus (Chicken) protein is Malate dehydrogenase, cytoplasmic (MDH1).